The primary structure comprises 102 residues: ATP-dependent Clp protease adapter protein ClpS (102 aa).

This sequence belongs to the ClpS family. Binds to the N-terminal domain of the chaperone ClpA.

Involved in the modulation of the specificity of the ClpAP-mediated ATP-dependent protein degradation. In Shewanella sp. (strain ANA-3), this protein is ATP-dependent Clp protease adapter protein ClpS.